We begin with the raw amino-acid sequence, 506 residues long: ESX-5 secretion system ATPase EccB5 (506 aa).

A helical membrane pass occupies residues V56–I76.

Belongs to the EccB family. In terms of assembly, part of the ESX-5 / type VII secretion system (T7SS), which is composed of cytosolic and membrane components. The ESX-5 membrane complex is composed of EccB5, EccC5, EccD5 and EccE5.

The protein resides in the cell inner membrane. An ATPase. Part of the ESX-5 specialized secretion system, which is responsible for the secretion of EsxN and a number of PE_PGRS and PPE proteins, including PPE41. The chain is ESX-5 secretion system ATPase EccB5 from Mycobacterium tuberculosis (strain CDC 1551 / Oshkosh).